Here is a 110-residue protein sequence, read N- to C-terminus: Large ribosomal subunit protein uL22 (110 aa).

Belongs to the universal ribosomal protein uL22 family. In terms of assembly, part of the 50S ribosomal subunit.

This protein binds specifically to 23S rRNA; its binding is stimulated by other ribosomal proteins, e.g. L4, L17, and L20. It is important during the early stages of 50S assembly. It makes multiple contacts with different domains of the 23S rRNA in the assembled 50S subunit and ribosome. Its function is as follows. The globular domain of the protein is located near the polypeptide exit tunnel on the outside of the subunit, while an extended beta-hairpin is found that lines the wall of the exit tunnel in the center of the 70S ribosome. This Aliarcobacter butzleri (strain RM4018) (Arcobacter butzleri) protein is Large ribosomal subunit protein uL22.